The following is a 177-amino-acid chain: Disulfide bond formation protein B (177 aa).

The Cytoplasmic portion of the chain corresponds to 1–14 (MLIFFKNLSMKRST). A helical membrane pass occupies residues 15 to 31 (WILLFISALVLESTALY). Topologically, residues 32–49 (FQHGMGLNPCVMCIYERV) are periplasmic. Cysteine 41 and cysteine 44 form a disulfide bridge. The chain crosses the membrane as a helical span at residues 50–65 (AILGILFSGLIGCIAP). Residues 66 to 72 (KWLVLRI) lie on the Cytoplasmic side of the membrane. A helical transmembrane segment spans residues 73-90 (LALLIGLGSAVKGLLLAI). The Periplasmic portion of the chain corresponds to 91–145 (KHLDYQINVYPWNQCAMVPDFPQTLPLDKWFPNIFMPSGSCSDITWSFLGFSMVQ). Cysteine 105 and cysteine 131 are disulfide-bonded. Residues 146–164 (WIIVIFACYFLFFIILSIS) form a helical membrane-spanning segment. At 165–177 (QFKKVRKNRMLFR) the chain is on the cytoplasmic side.

It belongs to the DsbB family.

The protein resides in the cell inner membrane. In terms of biological role, required for disulfide bond formation in some periplasmic proteins. Acts by oxidizing the DsbA protein. The protein is Disulfide bond formation protein B of Histophilus somni (strain 129Pt) (Haemophilus somnus).